A 1065-amino-acid polypeptide reads, in one-letter code: MSGNSANYDVGYPIYGAKFINEGTLLVAGGGGQFNSSFPNKITALKVNFQKKKHIRRFREITLDSIDDAPTSLDCNNNLILVGCNELFNDSSMENVNHHLRKFVFEQEHLKFVASIDFNRTTDPSVFTKFVYINQRATVAAIASSEVPTVIRIIDPRNLTENYEIETGREVNDLHFAPNGILLSYITSNSLEVASVRDGNFVARKTDFDKNLVLSNIRFLNDNTLLVAASLSNSDGVSLLKLGVSSKGVKILKTASFMFDLNGITSMDVSPNKKFVALSSNDNLVAIVSVEKLKLVQLVPRVHESTITKVTFSPDSRYLASTSMGNTINVLKLSGTSSSILRNIWKFFLNFVLLVVLAGAIQLGYKHNVHGFIYKHAHDIYKSKFKENTTIDQGSSSYFTINDDYRGITESADIISATDVASDIETEFSSFDTSTMRTTTEDEQKFVWISSSADSQFTSADIPTSASSSSSSSSSSFYEESVTNEPIVSSPTSEITKPLASPTEPNIVEKPSLPLNSESIDLLSSSSNSITEYPEPTPDLEEKLSSLIVEQSESEITTDRESVSKLLSTESPSLSHMPSSSSSSLSLSSSLTTSPTTALSTSTATAVTTTQTNPTNDAANTSFLDNSKPASTREIYKTKIITEVITKIEYRNIPASDSNAEAEQYVTTSSSMLLTPTDTMVSSPVSEIDPIASELERMVETPTHSISIASEFDSVASNLIPNEEILSTSASQDSISSHPSTFSDSSITSGFQSIEVSTVTSSVLASESIPSISDSTFSKFHSISEPVSSAIVETATSSFSKTETKTSRVIAFSTEDSERSSALIDNSEYTSVLADNLEPTSVLADNSEPTSVLADSSEPTSVFTDAVQSPKTSVGQSSLSESTNIEGTSMASMIFSSSGASIGALSDIGKGTLSVESASSTVAQPMPGVTTTAPSFVSSPHKISASSIDASGFVQKEIMIEVQSSKDSSEAFGVRHKISENVNTPVSRMLTTEMQASGTVDVTEDVSLSSEVISALNVEITSLPNPVAPPQTIAAPLNNNSNTNIVNDDNAVAGTVNYAGLHDEL.

The Cytoplasmic segment spans residues 1-346; sequence MSGNSANYDV…SSSILRNIWK (346 aa). Ser65 is subject to Phosphoserine. WD repeat units lie at residues 259-298 and 302-341; these read FDLN…LVQL and VHES…SSIL. The chain crosses the membrane as a helical; Signal-anchor for type II membrane protein span at residues 347 to 365; it reads FFLNFVLLVVLAGAIQLGY. The Lumenal portion of the chain corresponds to 366–1065; it reads KHNVHGFIYK…VNYAGLHDEL (700 aa). Asn388 carries an N-linked (GlcNAc...) asparagine glycan. Disordered regions lie at residues 458-477, 482-520, and 551-625; these read TSAD…SSSF, VTNE…SESI, and QSES…SFLD. Over residues 465-476 the composition is skewed to low complexity; that stretch reads SASSSSSSSSSS. Over residues 482-495 the composition is skewed to polar residues; sequence VTNEPIVSSPTSEI. The span at 568–621 shows a compositional bias: low complexity; sequence STESPSLSHMPSSSSSSLSLSSSLTTSPTTALSTSTATAVTTTQTNPTNDAANT. Asn620 carries an N-linked (GlcNAc...) asparagine glycan. Repeat copies occupy residues 824–833, 834–843, 844–853, and 854–863. Residues 824-863 are 4 X 10 AA tandem repeats; the sequence is IDNSEYTSVLADNLEPTSVLADNSEPTSVLADSSEPTSVF. Asn1039 carries N-linked (GlcNAc...) asparagine glycosylation. The Prevents secretion from ER motif lies at 1062-1065; it reads HDEL.

Belongs to the WD repeat SEC12 family.

The protein resides in the endoplasmic reticulum membrane. It is found in the golgi apparatus membrane. Putative guanine nucleotide-exchange factor (GEF) involved in the formation or budding of transport vesicles from the ER. Positive regulator of SAR1 probably through inhibition of the GTPase activation by SEC23. This chain is Putative guanine nucleotide-exchange factor SED4 (SED4), found in Saccharomyces cerevisiae (strain ATCC 204508 / S288c) (Baker's yeast).